Consider the following 657-residue polypeptide: Conserved oligomeric Golgi complex subunit 6 (657 aa).

Low complexity predominate over residues 14–26 (SGAANGLSNGAGA). A disordered region spans residues 14–36 (SGAANGLSNGAGATPAQPNNPLS).

It belongs to the COG6 family. In terms of assembly, component of the conserved oligomeric Golgi complex which is composed of eight different subunits and is required for normal Golgi morphology and localization.

Its subcellular location is the golgi apparatus membrane. Its function is as follows. Required for normal Golgi function. In Rattus norvegicus (Rat), this protein is Conserved oligomeric Golgi complex subunit 6 (Cog6).